The sequence spans 185 residues: Probable chorismate pyruvate-lyase (185 aa).

3 residues coordinate substrate: arginine 84, leucine 122, and glutamate 178.

The protein belongs to the UbiC family.

The protein resides in the cytoplasm. The enzyme catalyses chorismate = 4-hydroxybenzoate + pyruvate. Its pathway is cofactor biosynthesis; ubiquinone biosynthesis. Functionally, removes the pyruvyl group from chorismate, with concomitant aromatization of the ring, to provide 4-hydroxybenzoate (4HB) for the ubiquinone pathway. This chain is Probable chorismate pyruvate-lyase, found in Hydrogenovibrio crunogenus (strain DSM 25203 / XCL-2) (Thiomicrospira crunogena).